The primary structure comprises 983 residues: Receptor-like protein 19 (983 aa).

Residues 1-25 (MMKGYITLSFLIILIFNFLDEFAAS) form the signal peptide. The Extracellular portion of the chain corresponds to 26 to 937 (TRHLCDPDQS…EEDEEEVISW (912 aa)). N-linked (GlcNAc...) asparagine glycans are attached at residues Asn-66 and Asn-102. 31 LRR repeats span residues 82–108 (FGDV…LFRL), 111–135 (LRFL…LETL), 136–159 (SNLT…IGNL), 161–183 (HLIF…LGYL), 184–207 (SHLT…IGNL), 209–231 (YLTT…LGSL), 232–255 (FHLT…LGNL), 256–281 (SHLT…NLSC), 283–302 (TSFI…SFGN), 303–327 (LNQL…LLNL), 328–351 (RKLS…MSSL), 353–375 (NLKL…LFNI), 376–399 (PSLK…NISS), 401–424 (SNLT…ISKL), 425–448 (VNLK…IFSH), 450–474 (KSIE…ILSS), 475–498 (FKLL…SLSN), 501–524 (LVLI…LRSQ), 525–548 (ELML…LWML), 550–571 (VLNY…TKLG), 578–602 (PPAM…ICEL), 603–628 (PYLS…NIQS), 629–652 (PYLQ…IFES), 654–674 (ISLD…LSHI), 675–700 (SSLG…SLQE), 702–720 (QVLV…KTQF), 721–744 (SKLR…FFVN), 793–817 (LKVF…IGLL), 818–840 (KELH…SMGN), 841–865 (LMAL…LGKL), and 867–890 (YLAY…QFQT). Asn-137, Asn-158, Asn-171, Asn-190, Asn-195, and Asn-206 each carry an N-linked (GlcNAc...) asparagine glycan. N-linked (GlcNAc...) asparagine glycans are attached at residues Asn-254 and Asn-278. A glycan (N-linked (GlcNAc...) asparagine) is linked at Asn-347. N-linked (GlcNAc...) asparagine glycans are attached at residues Asn-389, Asn-396, and Asn-402. N-linked (GlcNAc...) asparagine glycosylation is found at Asn-456, Asn-461, Asn-492, and Asn-498. Asn-555, Asn-558, Asn-590, and Asn-616 each carry an N-linked (GlcNAc...) asparagine glycan. N-linked (GlcNAc...) asparagine glycosylation is found at Asn-734 and Asn-744. An N-linked (GlcNAc...) asparagine glycan is attached at Asn-824. An N-linked (GlcNAc...) asparagine glycan is attached at Asn-872. Residues 938 to 958 (IAAVIGFILGTALGLTFGCIL) form a helical membrane-spanning segment. At 959-983 (FSYKPDWFKNPFVRDKRRNIGTITH) the chain is on the cytoplasmic side.

The protein belongs to the RLP family.

The protein localises to the cell membrane. This is Receptor-like protein 19 from Arabidopsis thaliana (Mouse-ear cress).